We begin with the raw amino-acid sequence, 309 residues long: Porphobilinogen deaminase (309 aa).

The residue at position 241 (cysteine 241) is an S-(dipyrrolylmethanemethyl)cysteine.

It belongs to the HMBS family. In terms of assembly, monomer. Dipyrromethane is required as a cofactor.

It carries out the reaction 4 porphobilinogen + H2O = hydroxymethylbilane + 4 NH4(+). It participates in porphyrin-containing compound metabolism; protoporphyrin-IX biosynthesis; coproporphyrinogen-III from 5-aminolevulinate: step 2/4. In terms of biological role, tetrapolymerization of the monopyrrole PBG into the hydroxymethylbilane pre-uroporphyrinogen in several discrete steps. The polypeptide is Porphobilinogen deaminase (Geobacillus kaustophilus (strain HTA426)).